Here is a 259-residue protein sequence, read N- to C-terminus: uncharacterized protein (259 aa).

In terms of domain architecture, N-acetyltransferase spans 110–259 (QMGHPLTAWG…VHTVFHYFLT (150 aa)).

Its function is as follows. May be involved in maturation of the outermost layer of the spore. This is an uncharacterized protein from Bacillus subtilis (strain 168).